The following is a 43-amino-acid chain: Subtilosin-A (43 aa).

Positions 1 to 8 (MKKAVIVE) are excised as a propeptide. The segment at residues 9–43 (NKGCATCSIGAACLVDGPIPDFEIAGATGLFGLWG) is a cross-link (cyclopeptide (Asn-Gly)). A cross-link (2-cysteinyl-D-phenylalanine (Cys-Phe)) is located at residues 12–39 (CATCSIGAACLVDGPIPDFEIAGATGLF). Residues 15–36 (CSIGAACLVDGPIPDFEIAGAT) constitute a cross-link (2-cysteinyl-D-allo-threonine (Cys-Thr)). The 2-cysteinyl-L-phenylalanine (Cys-Phe) cross-link spans 21–30 (CLVDGPIPDF).

This sequence belongs to the bacteriocin class V family. This sactipeptide undergoes unique processing steps that include proteolytic cleavage after Glu-8, and covalent linkage of the alpha-amino of Asn-9 with the carboxyl of Gly-43 to form a cyclopeptide. Thioether cross-links are formed between cysteines and the alpha-carbons of other amino acids, Cys-12 to Phe-39, Cys-15 to Thr-36, and Cys-21 to Phe-30. In forming these cross-links, Thr-36 and Phe-39 are converted to D-amino acids. Propeptide cleavage and cyclopeptide formation only occur after all 3 thioether cross-links are formed.

Its subcellular location is the secreted. In terms of biological role, has bacteriocidal activity against some Gram-positive bacteria such as Listeria, some species of Bacillus and E.faecium. A single mutation (Thr-14-Ile) confers hemolytic activity against rabbit and human blood. This chain is Subtilosin-A (sboA), found in Bacillus subtilis (strain 168).